The primary structure comprises 260 residues: Acetylglutamate kinase (260 aa).

Substrate is bound by residues 46–47, arginine 68, and asparagine 160; that span reads GG.

Belongs to the acetylglutamate kinase family. ArgB subfamily.

Its subcellular location is the cytoplasm. It catalyses the reaction N-acetyl-L-glutamate + ATP = N-acetyl-L-glutamyl 5-phosphate + ADP. It participates in amino-acid biosynthesis; L-arginine biosynthesis; N(2)-acetyl-L-ornithine from L-glutamate: step 2/4. In terms of biological role, catalyzes the ATP-dependent phosphorylation of N-acetyl-L-glutamate. This chain is Acetylglutamate kinase, found in Shewanella sp. (strain MR-4).